The primary structure comprises 551 residues: MPTFDQALRKAGEFGRFQRRVFLLLCLTGVTFAFLFVGVVFLGSQPDYYWCRGPRATALAERCAWSPEEEWNLTTPELHVPAERRGQGHCHRYLLEATNTSSELSCDPLTAFPNRSAPLVSCSGDWRYVETHSTIVSQFDLVCSNAWMLDLTQAILNLGFLAGAFTLGYAADRYGRLIIYLISCFGVGITGVVVAFAPNFSVFVIFRFLQGVFGKGAWMTCFVIVTEIVGSKQRRIVGIVIQMFFTLGIIILPGIAYFTPSWQGIQLAISLPSFLFLLYYWVVPESPRWLITRKQGEKALQILRRVAKCNGKHLSSNYSEITVTDEEVSNPSCLDLVRTPQMRKCTLILMFAWFTSAVVYQGLVMRLGLIGGNLYIDFFISGLVELPGALLILLTIERLGRRLPFAASNIVAGVSCLVTAFLPEGIPWLRTTVATLGRLGITMAFEIVYLVNSELYPTTLRNFGVSLCSGLCDFGGIIAPFLLFRLAAIWLELPLIIFGILASVCGGLVMLLPETKGIALPETVEDVEKLGSSQLHQCGRKKKTQVSTSDV.

A helical transmembrane segment spans residues 21–41 (VFLLLCLTGVTFAFLFVGVVF). Residues Asn-72, Asn-99, and Asn-114 are each glycosylated (N-linked (GlcNAc...) asparagine). The chain crosses the membrane as a helical span at residues 177 to 197 (LIIYLISCFGVGITGVVVAFA). The N-linked (GlcNAc...) asparagine glycan is linked to Asn-199. Helical transmembrane passes span 236–256 (IVGI…PGIA) and 264–284 (GIQL…WVVP). Positions 284–288 (PESPR) match the Proline-rich sequence motif. N-linked (GlcNAc...) asparagine glycosylation is present at Asn-317. A run of 3 helical transmembrane segments spans residues 376–396 (IDFF…LLTI), 464–484 (GVSL…FLLF), and 493–513 (LPLI…MLLP).

This sequence belongs to the major facilitator (TC 2.A.1) superfamily. Organic cation transporter (TC 2.A.1.19) family. Highly expressed in placenta. Highly expressed in kidney cortex. In kidney, expressed specifically in the proximal and distal convoluted tubules and within Bowman capsule. Expressed in brain, particularly in dopaminergic neurons of the substantia nigra compacta, non-aminergic neurons of the ventral tegmental area, substantia nigra reticulata, locus coeruleus, hippocampus and cortex. In brain, also detected in astrocytes in the substantia nigra reticulata, several hypothalamic nuclei and nigrostriatal region. Expressed in neurons and glial cells of amygdala.

The protein resides in the cell membrane. It is found in the apical cell membrane. Its subcellular location is the basolateral cell membrane. The protein localises to the mitochondrion membrane. It localises to the endomembrane system. The protein resides in the nucleus membrane. It is found in the nucleus outer membrane. It catalyses the reaction (R)-noradrenaline(out) = (R)-noradrenaline(in). It carries out the reaction (R)-adrenaline(out) = (R)-adrenaline(in). The catalysed reaction is serotonin(out) = serotonin(in). The enzyme catalyses dopamine(out) = dopamine(in). It catalyses the reaction histamine(out) = histamine(in). It carries out the reaction tyramine(in) = tyramine(out). The catalysed reaction is guanidine(out) = guanidine(in). The enzyme catalyses agmatine(out) = agmatine(in). It catalyses the reaction spermidine(in) = spermidine(out). It carries out the reaction L-histidyl-L-proline diketopiperazine(in) = L-histidyl-L-proline diketopiperazine(out). The catalysed reaction is (R)-salsolinol(in) = (R)-salsolinol(out). Its function is as follows. Electrogenic voltage-dependent transporter that mediates the transport of a variety of organic cations such as endogenous bioactive amines, cationic drugs and xenobiotics. Cation cellular uptake or release is driven by the electrochemical potential, i.e. membrane potential and concentration gradient. Functions as a Na(+)- and Cl(-)-independent, bidirectional uniporter. Implicated in monoamine neurotransmitters uptake such as dopamine, adrenaline/epinephrine, noradrenaline/norepinephrine, homovanillic acid, histamine, serotonin and tyramine, thereby supporting a role in homeostatic regulation of aminergic neurotransmission in the brain. Transports dopaminergic neuromodulators cyclo(his-pro) and salsolinol with low efficiency. May be involved in the uptake and disposition of cationic compounds by renal clearance from the blood flow. May contribute to regulate the transport of cationic compounds in testis across the blood-testis-barrier. Mediates the transport of polyamine spermidine and putrescine. Mediates the bidirectional transport of polyamine agmatine. Also transports guanidine. May also mediate intracellular transport of organic cations, thereby playing a role in amine metabolism and intracellular signaling. The sequence is that of Solute carrier family 22 member 3 from Mus musculus (Mouse).